The following is a 384-amino-acid chain: Toluene efflux pump periplasmic linker protein TtgA (384 aa).

The N-terminal stretch at 1–22 (MQFKPAVTALVSAVALATLLSG) is a signal peptide. Cysteine 23 carries the N-palmitoyl cysteine lipid modification. Cysteine 23 carries the S-diacylglycerol cysteine lipid modification. Residues 115 to 155 (LAERYKQLIDEQAVSKQEYDDANAKRLQAEASLKSAQIDLR) adopt a coiled-coil conformation. Residues 362–384 (ATNVKKPAGPDQANAAKADAKAE) are disordered. Over residues 368–378 (PAGPDQANAAK) the composition is skewed to low complexity.

This sequence belongs to the membrane fusion protein (MFP) (TC 8.A.1) family.

The protein resides in the cell inner membrane. In terms of biological role, the periplasmic linker protein component of a constitutive organic solvent efflux system. Involved in export of toluene, styrene, m-xylene, propylbenzene and ethylbenzene. Also exports AMP and the antibiotics carbenicillin, nalidixic acid, chloramphenicol and tetracycline. The chain is Toluene efflux pump periplasmic linker protein TtgA (ttgA) from Pseudomonas putida (strain DOT-T1E).